The following is a 613-amino-acid chain: Chitin synthase 8 (613 aa).

The segment at 1-73 (MAVSPTAKRK…PAPLTRPPPP (73 aa)) is disordered. A glycan (N-linked (GlcNAc...) asparagine) is linked at Asn17. Residues 18-27 (LSRQSSSART) show a composition bias toward polar residues. Residues 61–73 (ESPPAPLTRPPPP) show a composition bias toward pro residues. Transmembrane regions (helical) follow at residues 119–139 (YSLI…LWNY) and 142–162 (YWYI…IFAI). Asn312, Asn421, and Asn471 each carry an N-linked (GlcNAc...) asparagine glycan. 2 helical membrane passes run 556 to 576 (VTTW…AIAL) and 583 to 602 (IFEN…RYAA).

It belongs to the chitin synthase family.

The protein localises to the cell membrane. The catalysed reaction is [(1-&gt;4)-N-acetyl-beta-D-glucosaminyl](n) + UDP-N-acetyl-alpha-D-glucosamine = [(1-&gt;4)-N-acetyl-beta-D-glucosaminyl](n+1) + UDP + H(+). In terms of biological role, polymerizes chitin, a structural polymer of the cell wall and septum, by transferring the sugar moiety of UDP-GlcNAc to the non-reducing end of the growing chitin polymer. Plays a role in cell wall integrity. Plays a key role in pathogenicity. Likely contributes to post-penetration virulence. The protein is Chitin synthase 8 of Verticillium dahliae (strain VdLs.17 / ATCC MYA-4575 / FGSC 10137) (Verticillium wilt).